Reading from the N-terminus, the 353-residue chain is Photosystem II protein D1 (353 aa).

T2 carries the post-translational modification N-acetylthreonine. The residue at position 2 (T2) is a Phosphothreonine. 3 helical membrane-spanning segments follow: residues 29–46 (YIGWFGVLMIPTLLTATS), 118–133 (HFFIGICSYMGREWEL), and 142–156 (WIAVAYSAPVAAATA). H118 serves as a coordination point for chlorophyll a. Y126 provides a ligand contact to pheophytin a. Residues D170 and E189 each contribute to the [CaMn4O5] cluster site. A helical membrane pass occupies residues 197–218 (FHMLGVAGVFGGSLFSAMHGSL). Residue H198 coordinates chlorophyll a. A quinone contacts are provided by residues H215 and 264 to 265 (SF). H215 is a binding site for Fe cation. H272 contributes to the Fe cation binding site. Residues 274 to 288 (FLAIWPVMGIWFTAL) form a helical membrane-spanning segment. 4 residues coordinate [CaMn4O5] cluster: H332, E333, D342, and A344. A propeptide spanning residues 345-353 (SVEAPSINA) is cleaved from the precursor.

Belongs to the reaction center PufL/M/PsbA/D family. As to quaternary structure, PSII is composed of 1 copy each of membrane proteins PsbA, PsbB, PsbC, PsbD, PsbE, PsbF, PsbH, PsbI, PsbJ, PsbK, PsbL, PsbM, PsbT, PsbX, PsbY, PsbZ, Psb30/Ycf12, at least 3 peripheral proteins of the oxygen-evolving complex and a large number of cofactors. It forms dimeric complexes. It depends on The D1/D2 heterodimer binds P680, chlorophylls that are the primary electron donor of PSII, and subsequent electron acceptors. It shares a non-heme iron and each subunit binds pheophytin, quinone, additional chlorophylls, carotenoids and lipids. D1 provides most of the ligands for the Mn4-Ca-O5 cluster of the oxygen-evolving complex (OEC). There is also a Cl(-1) ion associated with D1 and D2, which is required for oxygen evolution. The PSII complex binds additional chlorophylls, carotenoids and specific lipids. as a cofactor. Tyr-161 forms a radical intermediate that is referred to as redox-active TyrZ, YZ or Y-Z. Post-translationally, C-terminally processed by CTPA; processing is essential to allow assembly of the oxygen-evolving complex and thus photosynthetic growth.

It is found in the plastid. The protein localises to the chloroplast thylakoid membrane. It carries out the reaction 2 a plastoquinone + 4 hnu + 2 H2O = 2 a plastoquinol + O2. Its function is as follows. Photosystem II (PSII) is a light-driven water:plastoquinone oxidoreductase that uses light energy to abstract electrons from H(2)O, generating O(2) and a proton gradient subsequently used for ATP formation. It consists of a core antenna complex that captures photons, and an electron transfer chain that converts photonic excitation into a charge separation. The D1/D2 (PsbA/PsbD) reaction center heterodimer binds P680, the primary electron donor of PSII as well as several subsequent electron acceptors. The protein is Photosystem II protein D1 of Ostreococcus tauri.